We begin with the raw amino-acid sequence, 449 residues long: tRNA-2-methylthio-N(6)-dimethylallyladenosine synthase (449 aa).

The region spanning 3–118 (KKVFVKTFGC…LPELLAQREA (116 aa)) is the MTTase N-terminal domain. Residues cysteine 12, cysteine 49, cysteine 81, cysteine 155, cysteine 159, and cysteine 162 each contribute to the [4Fe-4S] cluster site. Residues 141–376 (RVEGASAFVS…VINANIKSIS (236 aa)) enclose the Radical SAM core domain. The TRAM domain maps to 377–440 (ESRVGTVQRI…AYTLRGEVVT (64 aa)).

Belongs to the methylthiotransferase family. MiaB subfamily. In terms of assembly, monomer. It depends on [4Fe-4S] cluster as a cofactor.

The protein localises to the cytoplasm. The enzyme catalyses N(6)-dimethylallyladenosine(37) in tRNA + (sulfur carrier)-SH + AH2 + 2 S-adenosyl-L-methionine = 2-methylsulfanyl-N(6)-dimethylallyladenosine(37) in tRNA + (sulfur carrier)-H + 5'-deoxyadenosine + L-methionine + A + S-adenosyl-L-homocysteine + 2 H(+). Its function is as follows. Catalyzes the methylthiolation of N6-(dimethylallyl)adenosine (i(6)A), leading to the formation of 2-methylthio-N6-(dimethylallyl)adenosine (ms(2)i(6)A) at position 37 in tRNAs that read codons beginning with uridine. In Paracidovorax citrulli (strain AAC00-1) (Acidovorax citrulli), this protein is tRNA-2-methylthio-N(6)-dimethylallyladenosine synthase.